We begin with the raw amino-acid sequence, 82 residues long: Penaeidin-3a (82 aa).

An N-terminal signal peptide occupies residues 1-19 (MRLVVCLVFLASFALVCQG). Glutamine 20 is subject to Pyrrolidone carboxylic acid. Cystine bridges form between cysteine 51–cysteine 66, cysteine 55–cysteine 73, and cysteine 67–cysteine 74. Serine 81 carries the post-translational modification Serine amide.

The N-terminus forms pyrrolidone carboxylic acid. In terms of tissue distribution, higher expression in hemocytes and to a lesser extent in heart, testis, gills, intestine, lymphoid organ and hepatopancreas. Traces in eyes and subcuticular epithelium. Not present in the brain.

The protein localises to the cytoplasmic granule. Functionally, antibacterial activity against M.luteus and E.coli bacteria. Antifungal activity against N.crassa and F.oxysporum. Presents chitin-binding activity. The protein is Penaeidin-3a of Penaeus vannamei (Whiteleg shrimp).